The chain runs to 251 residues: HTH-type transcriptional regulator UlaR (251 aa).

One can recognise an HTH deoR-type domain in the interval 3–58 (EAQRHQILLEMLAQLGFVTVEKVVERLGISPATARRDINKLDESGKLKKVRNGAEA). Residues 20-39 (VTVEKVVERLGISPATARRD) constitute a DNA-binding region (H-T-H motif).

It is found in the cytoplasm. In terms of biological role, represses ulaG and the ulaABCDEF operon. This is HTH-type transcriptional regulator UlaR from Escherichia coli (strain SMS-3-5 / SECEC).